Here is a 155-residue protein sequence, read N- to C-terminus: uncharacterized protein (155 aa).

Belongs to the IIV-6 145L family.

This is an uncharacterized protein from Acheta domesticus (House cricket).